A 127-amino-acid chain; its full sequence is Histidine-containing phosphotransfer protein 4 (127 aa).

Residues 27-122 (NPNFVEEVSA…STLRKKLEHY (96 aa)) form the HPt domain. At His-68 the chain carries Phosphohistidine.

Interacts with the B-type response regulators ARR1 and ARR2. Two-component system major event consists of a His-to-Asp phosphorelay between a sensor histidine kinase (HK) and a response regulator (RR). In plants, the His-to-Asp phosphorelay involves an additional intermediate named Histidine-containing phosphotransfer protein (HPt). This multistep phosphorelay consists of a His-Asp-His-Asp sequential transfer of a phosphate group between first a His and an Asp of the HK protein, followed by the transfer to a conserved His of the HPt protein and finally the transfer to an Asp in the receiver domain of the RR protein. In terms of tissue distribution, predominantly expressed in aerial parts of the plant.

The protein localises to the cytoplasm. Its subcellular location is the cytosol. It is found in the nucleus. Functions as a two-component phosphorelay mediator between cytokinin sensor histidine kinases and response regulators (B-type ARRs). Plays an important role in propagating cytokinin signal transduction through the multistep His-to-Asp phosphorelay. The protein is Histidine-containing phosphotransfer protein 4 (AHP4) of Arabidopsis thaliana (Mouse-ear cress).